The following is a 242-amino-acid chain: NAD(P)H-quinone oxidoreductase subunit K (242 aa).

[4Fe-4S] cluster is bound by residues cysteine 59, cysteine 60, cysteine 124, and cysteine 155.

It belongs to the complex I 20 kDa subunit family. NDH-1 can be composed of about 15 different subunits; different subcomplexes with different compositions have been identified which probably have different functions. [4Fe-4S] cluster is required as a cofactor.

The protein localises to the cellular thylakoid membrane. The enzyme catalyses a plastoquinone + NADH + (n+1) H(+)(in) = a plastoquinol + NAD(+) + n H(+)(out). It carries out the reaction a plastoquinone + NADPH + (n+1) H(+)(in) = a plastoquinol + NADP(+) + n H(+)(out). Functionally, NDH-1 shuttles electrons from an unknown electron donor, via FMN and iron-sulfur (Fe-S) centers, to quinones in the respiratory and/or the photosynthetic chain. The immediate electron acceptor for the enzyme in this species is believed to be plastoquinone. Couples the redox reaction to proton translocation, and thus conserves the redox energy in a proton gradient. Cyanobacterial NDH-1 also plays a role in inorganic carbon-concentration. The protein is NAD(P)H-quinone oxidoreductase subunit K of Synechococcus sp. (strain RCC307).